Consider the following 312-residue polypeptide: Cytoplasmic dynein intermediate light chain DYN3 (312 aa).

It belongs to the dynein light intermediate chain DYN3 family. As to quaternary structure, the dynein complex consists of at least two heavy chains and a number of intermediate and light chains. Interacts with DYN1.

It is found in the cytoplasm. Its subcellular location is the cytoskeleton. Component of the cytoplasmic dynein which acts as a motor for the intracellular retrograde motility of vesicles and organelles along microtubules. May play an important role in the proper orientation of the mitotic spindle into the budding daughter cell yeast. Probably required for normal progression of the cell cycle. This Saccharomyces cerevisiae (strain ATCC 204508 / S288c) (Baker's yeast) protein is Cytoplasmic dynein intermediate light chain DYN3 (DYN3).